Reading from the N-terminus, the 719-residue chain is DNA ligase (719 aa).

NAD(+)-binding positions include 42–46 (DAAYD), 92–93 (SL), and E126. The active-site N6-AMP-lysine intermediate is K128. NAD(+) is bound by residues R149, E185, K301, and K325. Residues C430, C433, C448, and C454 each contribute to the Zn(2+) site. Positions 640–719 (ATGSPVEGKT…DDWFKLVGED (80 aa)) constitute a BRCT domain.

This sequence belongs to the NAD-dependent DNA ligase family. LigA subfamily. Mg(2+) is required as a cofactor. Mn(2+) serves as cofactor.

The catalysed reaction is NAD(+) + (deoxyribonucleotide)n-3'-hydroxyl + 5'-phospho-(deoxyribonucleotide)m = (deoxyribonucleotide)n+m + AMP + beta-nicotinamide D-nucleotide.. Functionally, DNA ligase that catalyzes the formation of phosphodiester linkages between 5'-phosphoryl and 3'-hydroxyl groups in double-stranded DNA using NAD as a coenzyme and as the energy source for the reaction. It is essential for DNA replication and repair of damaged DNA. The sequence is that of DNA ligase from Brucella suis biovar 1 (strain 1330).